A 161-amino-acid chain; its full sequence is uncharacterized protein (161 aa).

In terms of assembly, interacts with ribosomes.

This is an uncharacterized protein from Saccharomyces cerevisiae (strain ATCC 204508 / S288c) (Baker's yeast).